The primary structure comprises 195 residues: Early light-induced protein 1, chloroplastic (195 aa).

The N-terminal 46 residues, 1–46 (MATASFNMQSVFAGGLTTRKINTNKLFSAGSFPNLKRNYPVGVRCM), are a transit peptide targeting the chloroplast. The disordered stretch occupies residues 46-81 (MAEGGPTNEDSSPAPSTSAAQPLPKSPSPPPPMKPK). The span at 56–68 (SSPAPSTSAAQPL) shows a compositional bias: low complexity. Pro residues predominate over residues 69-79 (PKSPSPPPPMK). 3 helical membrane-spanning segments follow: residues 104 to 124 (LAMVGFVAALAVELSKGENVL), 131 to 151 (GVSWFLGTTAILTLASLVPLF), and 175 to 195 (FAMLGLVALAFTEFVKGGTLV).

The protein belongs to the ELIP/psbS family.

Its subcellular location is the plastid. The protein localises to the chloroplast thylakoid membrane. Prevents excess accumulation of free chlorophyll by inhibiting the entire chlorophyll biosynthesis pathway (e.g. 5-aminolevulinate synthesis and Mg-protoporphyrin IX chelatase activity), and hence prevent photooxidative stress. Probably involved in the integration of pigments into the mature light-harvesting pigment-protein complexes. Light-harvesting chlorophyll (LHC) a/b-binding protein required to ensure a high rate of chlorophyll accumulation during deetiolation in continuous high light. Involved in seed germination. May fulfill a photoprotective functions. In Arabidopsis thaliana (Mouse-ear cress), this protein is Early light-induced protein 1, chloroplastic.